A 633-amino-acid chain; its full sequence is Glutamyl-tRNA(Gln) amidotransferase subunit E (633 aa).

The protein belongs to the GatB/GatE family. GatE subfamily. As to quaternary structure, heterodimer of GatD and GatE.

It carries out the reaction L-glutamyl-tRNA(Gln) + L-glutamine + ATP + H2O = L-glutaminyl-tRNA(Gln) + L-glutamate + ADP + phosphate + H(+). Functionally, allows the formation of correctly charged Gln-tRNA(Gln) through the transamidation of misacylated Glu-tRNA(Gln) in organisms which lack glutaminyl-tRNA synthetase. The reaction takes place in the presence of glutamine and ATP through an activated gamma-phospho-Glu-tRNA(Gln). The GatDE system is specific for glutamate and does not act on aspartate. The sequence is that of Glutamyl-tRNA(Gln) amidotransferase subunit E from Methanosarcina acetivorans (strain ATCC 35395 / DSM 2834 / JCM 12185 / C2A).